The following is a 767-amino-acid chain: Protein transport protein Sec23A (767 aa).

Positions 61, 66, 85, and 88 each coordinate Zn(2+). A Gelsolin-like repeat occupies 634–720 (PEPVLLDSSS…EHGGSQARFL (87 aa)).

This sequence belongs to the SEC23/SEC24 family. SEC23 subfamily. As to quaternary structure, COPII is composed of at least five proteins: the Sec23/24 complex, the Sec13/31 complex and Sar1.

It is found in the cytoplasmic vesicle. Its subcellular location is the COPII-coated vesicle membrane. The protein resides in the endoplasmic reticulum membrane. The protein localises to the cytoplasm. It localises to the cytosol. In terms of biological role, component of the coat protein complex II (COPII) which promotes the formation of transport vesicles from the endoplasmic reticulum (ER). The coat has two main functions, the physical deformation of the endoplasmic reticulum membrane into vesicles and the selection of cargo molecules for their transport to the Golgi complex. In Gallus gallus (Chicken), this protein is Protein transport protein Sec23A.